We begin with the raw amino-acid sequence, 611 residues long: uncharacterized protein (611 aa).

Residues 51–351 form the SAC domain; it reads LYGFIRLKIY…DYHKQGSRNL (301 aa).

This sequence to yeast RSD1 and S.pombe SpBC19F5.03.

This is an uncharacterized protein from Schizosaccharomyces pombe (strain 972 / ATCC 24843) (Fission yeast).